The primary structure comprises 436 residues: Elongation factor 1-alpha (436 aa).

Residues 8–232 form the tr-type G domain; it reads KPHLNMIVTG…DDFKMAEKPV (225 aa). The interval 17–24 is G1; sequence GHIDNGKS. GTP is bound at residue 17 to 24; sequence GHIDNGKS. S24 provides a ligand contact to Mg(2+). A G2 region spans residues 74 to 78; the sequence is GITID. Residues 95 to 98 are G3; it reads DAPG. GTP is bound by residues 95-99 and 157-160; these read DAPGH and NKMD. A G4 region spans residues 157-160; that stretch reads NKMD. A G5 region spans residues 196-198; that stretch reads SGW.

This sequence belongs to the TRAFAC class translation factor GTPase superfamily. Classic translation factor GTPase family. EF-Tu/EF-1A subfamily.

Its subcellular location is the cytoplasm. It catalyses the reaction GTP + H2O = GDP + phosphate + H(+). Its function is as follows. GTP hydrolase that promotes the GTP-dependent binding of aminoacyl-tRNA to the A-site of ribosomes during protein biosynthesis. This chain is Elongation factor 1-alpha, found in Cenarchaeum symbiosum (strain A).